A 431-amino-acid chain; its full sequence is Serine/threonine-protein kinase Sgk1 (431 aa).

A necessary for localization to the mitochondria region spans residues 1–60; it reads MTVKTEAAKGTLTYSRMRGMVAILIAFMKQRRMGLNDFIQKIANNSYACKHPEVQSILKI. The disordered stretch occupies residues 66-92; the sequence is PELMNANPSPPPSPSQQINLGPSSNPH. S74 is modified (phosphoserine). Residue S78 is modified to Phosphoserine; by MAPK7. Residues 81–91 show a composition bias toward polar residues; the sequence is QQINLGPSSNP. The 258-residue stretch at 98–355 folds into the Protein kinase domain; that stretch reads FHFLKVIGKG…FMEIKSHVFF (258 aa). Residues 104 to 112 and K127 each bind ATP; that span reads IGKGSFGKV. A Nuclear localization signal motif is present at residues 131 to 141; the sequence is KKAILKKKEEK. D222 acts as the Proton acceptor in catalysis. T256 is modified (phosphothreonine; by PDPK1). The AGC-kinase C-terminal domain occupies 356 to 431; the sequence is SLINWDDLIN…SYAPPTDSFL (76 aa). T369 is subject to Phosphothreonine; by PKA. 3 positions are modified to phosphoserine: S397, S401, and S422.

The protein belongs to the protein kinase superfamily. AGC Ser/Thr protein kinase family. Homodimer; disulfide-linked. Forms a trimeric complex with FBXW7 and NOTCH1. Interacts with MAPK3/ERK1, MAPK1/ERK2, MAP2K1/MEK1, MAP2K2/MEK2, NEDD4, NEDD4L, MAPT/TAU, MAPK7, CREB1, SLC9A3R2/NHERF2 and KCNJ1/ROMK1. Associates with the mammalian target of rapamycin complex 2 (mTORC2) via an interaction with MAPKAP1/SIN1. Regulated by phosphorylation. Activated by phosphorylation on Ser-422 by mTORC2, transforming it into a substrate for PDPK1 which phosphorylates it on Thr-256. Phosphorylation on Ser-397 and Ser-401 are also essential for its activity. Phosphorylation on Ser-78 by MAPK7 is required for growth factor-induced cell cycle progression. Post-translationally, ubiquitinated by NEDD4L; which promotes proteasomal degradation. Ubiquitinated by SYVN1 at the endoplasmic reticulum; which promotes rapid proteasomal degradation and maintains a high turnover rate in resting cells. Isoform 2 shows enhanced stability. As to expression, expressed in most tissues with highest levels in the pancreas, followed by placenta, kidney and lung. Isoform 2 is strongly expressed in brain and pancreas, weaker in heart, placenta, lung, liver and skeletal muscle.

The protein localises to the cytoplasm. It localises to the nucleus. It is found in the endoplasmic reticulum membrane. The protein resides in the cell membrane. Its subcellular location is the mitochondrion. It catalyses the reaction L-seryl-[protein] + ATP = O-phospho-L-seryl-[protein] + ADP + H(+). The enzyme catalyses L-threonyl-[protein] + ATP = O-phospho-L-threonyl-[protein] + ADP + H(+). With respect to regulation, two specific sites, one in the kinase domain (Thr-256) and the other in the C-terminal regulatory region (Ser-422), need to be phosphorylated for its full activation. Phosphorylation at Ser-397 and Ser-401 are also essential for its activity. Activated by WNK1, WNK2, WNK3 and WNK4; which promote phosphorylation by mTORC2. Functionally, serine/threonine-protein kinase which is involved in the regulation of a wide variety of ion channels, membrane transporters, cellular enzymes, transcription factors, neuronal excitability, cell growth, proliferation, survival, migration and apoptosis. Plays an important role in cellular stress response. Contributes to regulation of renal Na(+) retention, renal K(+) elimination, salt appetite, gastric acid secretion, intestinal Na(+)/H(+) exchange and nutrient transport, insulin-dependent salt sensitivity of blood pressure, salt sensitivity of peripheral glucose uptake, cardiac repolarization and memory consolidation. Up-regulates Na(+) channels: SCNN1A/ENAC, SCN5A and ASIC1/ACCN2, K(+) channels: KCNJ1/ROMK1, KCNA1-5, KCNQ1-5 and KCNE1, epithelial Ca(2+) channels: TRPV5 and TRPV6, chloride channels: BSND, CLCN2 and CFTR, glutamate transporters: SLC1A3/EAAT1, SLC1A2 /EAAT2, SLC1A1/EAAT3, SLC1A6/EAAT4 and SLC1A7/EAAT5, amino acid transporters: SLC1A5/ASCT2, SLC38A1/SN1 and SLC6A19, creatine transporter: SLC6A8, Na(+)/dicarboxylate cotransporter: SLC13A2/NADC1, Na(+)-dependent phosphate cotransporter: SLC34A2/NAPI-2B, glutamate receptor: GRIK2/GLUR6. Up-regulates carriers: SLC9A3/NHE3, SLC12A1/NKCC2, SLC12A3/NCC, SLC5A3/SMIT, SLC2A1/GLUT1, SLC5A1/SGLT1 and SLC15A2/PEPT2. Regulates enzymes: GSK3A/B, PMM2 and Na(+)/K(+) ATPase, and transcription factors: CTNNB1 and nuclear factor NF-kappa-B. Stimulates sodium transport into epithelial cells by enhancing the stability and expression of SCNN1A/ENAC. This is achieved by phosphorylating the NEDD4L ubiquitin E3 ligase, promoting its interaction with 14-3-3 proteins, thereby preventing it from binding to SCNN1A/ENAC and targeting it for degradation. Regulates store-operated Ca(+2) entry (SOCE) by stimulating ORAI1 and STIM1. Regulates KCNJ1/ROMK1 directly via its phosphorylation or indirectly via increased interaction with SLC9A3R2/NHERF2. Phosphorylates MDM2 and activates MDM2-dependent ubiquitination of p53/TP53. Phosphorylates MAPT/TAU and mediates microtubule depolymerization and neurite formation in hippocampal neurons. Phosphorylates SLC2A4/GLUT4 and up-regulates its activity. Phosphorylates APBB1/FE65 and promotes its localization to the nucleus. Phosphorylates MAPK1/ERK2 and activates it by enhancing its interaction with MAP2K1/MEK1 and MAP2K2/MEK2. Phosphorylates FBXW7 and plays an inhibitory role in the NOTCH1 signaling. Phosphorylates FOXO1 resulting in its relocalization from the nucleus to the cytoplasm. Phosphorylates FOXO3, promoting its exit from the nucleus and interference with FOXO3-dependent transcription. Phosphorylates BRAF and MAP3K3/MEKK3 and inhibits their activity. Phosphorylates SLC9A3/NHE3 in response to dexamethasone, resulting in its activation and increased localization at the cell membrane. Phosphorylates CREB1. Necessary for vascular remodeling during angiogenesis. Sustained high levels and activity may contribute to conditions such as hypertension and diabetic nephropathy. Isoform 2 exhibited a greater effect on cell plasma membrane expression of SCNN1A/ENAC and Na(+) transport than isoform 1. This chain is Serine/threonine-protein kinase Sgk1 (SGK1), found in Homo sapiens (Human).